Here is a 489-residue protein sequence, read N- to C-terminus: Rhamnulokinase (489 aa).

13 to 17 (ASSGR) lines the ATP pocket. Cys-68 and Cys-222 form a disulfide bridge. Substrate is bound by residues Gly-83 and 236–238 (HDT). The active-site Proton acceptor is Asp-237. Position 259 (Thr-259) interacts with ATP. Asn-296 lines the substrate pocket. Gln-304 is an ATP binding site. The cysteines at positions 353 and 370 are disulfide-linked. Gly-402 contributes to the ATP binding site. The cysteines at positions 413 and 417 are disulfide-linked.

Belongs to the rhamnulokinase family. In terms of assembly, monomer. Mg(2+) serves as cofactor.

The enzyme catalyses L-rhamnulose + ATP = L-rhamnulose 1-phosphate + ADP + H(+). The protein operates within carbohydrate degradation; L-rhamnose degradation; glycerone phosphate from L-rhamnose: step 2/3. Involved in the catabolism of L-rhamnose (6-deoxy-L-mannose). Catalyzes the transfer of the gamma-phosphate group from ATP to the 1-hydroxyl group of L-rhamnulose to yield L-rhamnulose 1-phosphate. This chain is Rhamnulokinase, found in Escherichia coli O127:H6 (strain E2348/69 / EPEC).